The chain runs to 466 residues: Oxysterol-binding protein 4 (466 aa).

Residues 1-12 are compositionally biased toward polar residues; sequence MEIGTSSTTNNI. The segment at 1-67 is disordered; sequence MEIGTSSTTN…STSPPSPPIE (67 aa). Low complexity predominate over residues 24–45; the sequence is NNNNHNNNSSNNSSNNNSISSS. A compositionally biased stretch (polar residues) spans 46–60; the sequence is PTDSSQLMNGEQSTS.

The protein belongs to the OSBP family.

This is Oxysterol-binding protein 4 (osbD) from Dictyostelium discoideum (Social amoeba).